The sequence spans 76 residues: Translational regulator CsrA (76 aa).

It belongs to the CsrA/RsmA family. As to quaternary structure, homodimer; the beta-strands of each monomer intercalate to form a hydrophobic core, while the alpha-helices form wings that extend away from the core.

The protein resides in the cytoplasm. In terms of biological role, a translational regulator that binds mRNA to regulate translation initiation and/or mRNA stability. Usually binds in the 5'-UTR at or near the Shine-Dalgarno sequence preventing ribosome-binding, thus repressing translation. Its main target seems to be the major flagellin gene, while its function is anatagonized by FliW. The polypeptide is Translational regulator CsrA (Wolinella succinogenes (strain ATCC 29543 / DSM 1740 / CCUG 13145 / JCM 31913 / LMG 7466 / NCTC 11488 / FDC 602W) (Vibrio succinogenes)).